Consider the following 158-residue polypeptide: 2-C-methyl-D-erythritol 2,4-cyclodiphosphate synthase (158 aa).

A divalent metal cation contacts are provided by Asp-9 and His-11. Residues 9 to 11 and 35 to 36 contribute to the 4-CDP-2-C-methyl-D-erythritol 2-phosphate site; these read DVH and HS. His-43 serves as a coordination point for a divalent metal cation. 4-CDP-2-C-methyl-D-erythritol 2-phosphate-binding positions include 57 to 59, 62 to 66, 133 to 136, Phe-140, and Arg-143; these read DIG, FPDTD, and TTTE.

Belongs to the IspF family. In terms of assembly, homotrimer. It depends on a divalent metal cation as a cofactor.

The enzyme catalyses 4-CDP-2-C-methyl-D-erythritol 2-phosphate = 2-C-methyl-D-erythritol 2,4-cyclic diphosphate + CMP. Its pathway is isoprenoid biosynthesis; isopentenyl diphosphate biosynthesis via DXP pathway; isopentenyl diphosphate from 1-deoxy-D-xylulose 5-phosphate: step 4/6. In terms of biological role, involved in the biosynthesis of isopentenyl diphosphate (IPP) and dimethylallyl diphosphate (DMAPP), two major building blocks of isoprenoid compounds. Catalyzes the conversion of 4-diphosphocytidyl-2-C-methyl-D-erythritol 2-phosphate (CDP-ME2P) to 2-C-methyl-D-erythritol 2,4-cyclodiphosphate (ME-CPP) with a corresponding release of cytidine 5-monophosphate (CMP). This Actinobacillus pleuropneumoniae serotype 7 (strain AP76) protein is 2-C-methyl-D-erythritol 2,4-cyclodiphosphate synthase.